The chain runs to 245 residues: Pyridoxine 5'-phosphate synthase (245 aa).

Residues asparagine 8 and arginine 19 each coordinate 3-amino-2-oxopropyl phosphate. Histidine 44 acts as the Proton acceptor in catalysis. 1-deoxy-D-xylulose 5-phosphate contacts are provided by arginine 46 and histidine 51. Glutamate 76 serves as the catalytic Proton acceptor. Threonine 106 provides a ligand contact to 1-deoxy-D-xylulose 5-phosphate. Histidine 198 acts as the Proton donor in catalysis. Residues aspartate 199 and 221-222 (GH) each bind 3-amino-2-oxopropyl phosphate.

Belongs to the PNP synthase family. As to quaternary structure, homooctamer; tetramer of dimers.

It localises to the cytoplasm. It carries out the reaction 3-amino-2-oxopropyl phosphate + 1-deoxy-D-xylulose 5-phosphate = pyridoxine 5'-phosphate + phosphate + 2 H2O + H(+). Its pathway is cofactor biosynthesis; pyridoxine 5'-phosphate biosynthesis; pyridoxine 5'-phosphate from D-erythrose 4-phosphate: step 5/5. Functionally, catalyzes the complicated ring closure reaction between the two acyclic compounds 1-deoxy-D-xylulose-5-phosphate (DXP) and 3-amino-2-oxopropyl phosphate (1-amino-acetone-3-phosphate or AAP) to form pyridoxine 5'-phosphate (PNP) and inorganic phosphate. This is Pyridoxine 5'-phosphate synthase from Brucella anthropi (strain ATCC 49188 / DSM 6882 / CCUG 24695 / JCM 21032 / LMG 3331 / NBRC 15819 / NCTC 12168 / Alc 37) (Ochrobactrum anthropi).